Consider the following 2037-residue polypeptide: Fatty acid synthase subunit beta (2037 aa).

The interval 1–453 (MSTHRPFQLT…VYDTFDGSDF (453 aa)) is acetyltransferase. The active-site For acetyltransferase activity is the S261. The enoyl reductase stretch occupies residues 465-798 (VKLITELPVH…GSRVMTSKES (334 aa)). The dehydratase stretch occupies residues 1132–1612 (GTELNWLQAF…LPNDTLQTTM (481 aa)). Residues 1506 to 1634 (NGKTIEESVI…KVETRNVETE (129 aa)) enclose the MaoC-like domain. A malonyl/palmitoyl transferase region spans residues 1613–1833 (EHVGMINGRK…MTMQVAVPRD (221 aa)). Residue S1796 is the For malonyltransferase activity of the active site.

It belongs to the fungal fatty acid synthetase subunit beta family. [Alpha(6)beta(6)] hexamers of two multifunctional subunits (alpha and beta).

The catalysed reaction is acetyl-CoA + n malonyl-CoA + 2n NADPH + 4n H(+) = a long-chain-acyl-CoA + n CoA + n CO2 + 2n NADP(+).. It carries out the reaction holo-[ACP] + acetyl-CoA = acetyl-[ACP] + CoA. It catalyses the reaction holo-[ACP] + malonyl-CoA = malonyl-[ACP] + CoA. The enzyme catalyses a (3R)-hydroxyacyl-[ACP] = a (2E)-enoyl-[ACP] + H2O. The catalysed reaction is a 2,3-saturated acyl-[ACP] + NAD(+) = a (2E)-enoyl-[ACP] + NADH + H(+). It carries out the reaction (9Z)-octadecenoyl-[ACP] + H2O = (9Z)-octadecenoate + holo-[ACP] + H(+). Its function is as follows. Fatty acid synthetase catalyzes the formation of long-chain fatty acids from acetyl-CoA, malonyl-CoA and NADPH. The beta subunit contains domains for: [acyl-carrier-protein] acetyltransferase and malonyltransferase, S-acyl fatty acid synthase thioesterase, enoyl-[acyl-carrier-protein] reductase, and 3-hydroxypalmitoyl-[acyl-carrier-protein] dehydratase. This is Fatty acid synthase subunit beta (FAS1) from Candida albicans (Yeast).